The primary structure comprises 400 residues: MGGWSSKPRKGMGTNLSVPNPLGFFPDHQLDPVFGANSNNPDWDFNPIKDHWPAANQVGVGAFGPGFTPPHGGVLGWSPQAQGMLTPVSTIPPPASANRQSGRQPTPISPPLRDSHPQAMQWNSTAFHQALQDPRVRGLYFPAGGSSSGTVNPAPNIASHISSISARTGDPVTNMENITSGFLGPLPVLQAGFFLLTRILTIPQSLDSWWTSLNFLGGSPVCLGQNSRSPTSNHSPTSCPPICPGYRWMCLRRFIIFLFILLLCLIFLLVLLDYQGMLPVCPLILGSTTTSTGPCKTCTTPAQGNSMFPSCCCTKPTDGNCTCIPIPSSWAFAKYLWEWASVRFSWLSLLVPFVQWFVGLSPTVWLSAIWMMWYWGPSLYSIVSSFIPLLPIFFCLWVYI.

Residue M1 is modified to N-acetylmethionine. Disordered stretches follow at residues 1–20 (MGGW…SVPN) and 85–114 (LTPV…PLRD). The N-myristoyl glycine; by host moiety is linked to residue G2. The tract at residues 2-119 (GGWSSKPRKG…PPLRDSHPQA (118 aa)) is pre-S1. The interval 2-174 (GGWSSKPRKG…SARTGDPVTN (173 aa)) is pre-S. Residues 2 to 181 (GGWSSKPRKG…VTNMENITSG (180 aa)) lie on the Virion surface; in external conformation side of the membrane. The Intravirion; in internal conformation portion of the chain corresponds to 2–253 (GGWSSKPRKG…PGYRWMCLRR (252 aa)). W4 is a glycosylation site (N-linked (GlcNAc...) asparagine). Over residues 97 to 106 (ANRQSGRQPT) the composition is skewed to polar residues. The tract at residues 120 to 174 (MQWNSTAFHQALQDPRVRGLYFPAGGSSSGTVNPAPNIASHISSISARTGDPVTN) is pre-S2. A helical membrane pass occupies residues 182 to 202 (FLGPLPVLQAGFFLLTRILTI). The Intravirion; in external conformation portion of the chain corresponds to 203-253 (PQSLDSWWTSLNFLGGSPVCLGQNSRSPTSNHSPTSCPPICPGYRWMCLRR). A helical membrane pass occupies residues 254-274 (FIIFLFILLLCLIFLLVLLDY). Topologically, residues 275–348 (QGMLPVCPLI…WASVRFSWLS (74 aa)) are virion surface. N-linked (GlcNAc...) asparagine; by host glycosylation is present at N320. The chain crosses the membrane as a helical span at residues 349-369 (LLVPFVQWFVGLSPTVWLSAI). Topologically, residues 370 to 375 (WMMWYW) are intravirion. The helical transmembrane segment at 376-398 (GPSLYSIVSSFIPLLPIFFCLWV) threads the bilayer. Residues 399-400 (YI) lie on the Virion surface side of the membrane.

It belongs to the orthohepadnavirus major surface antigen family. As to quaternary structure, in its internal form (Li-HBsAg), interacts with the capsid protein and with the isoform S. Interacts with host chaperone CANX. Associates with host chaperone CANX through its pre-S2 N glycan; this association may be essential for isoform M proper secretion. In terms of assembly, interacts with isoform L. Interacts with the antigens of satellite virus HDV (HDVAgs); this interaction is required for encapsidation of HDV genomic RNA. Post-translationally, isoform M is N-terminally acetylated by host at a ratio of 90%, and N-glycosylated by host at the pre-S2 region. In terms of processing, myristoylated.

The protein localises to the virion membrane. The large envelope protein exists in two topological conformations, one which is termed 'external' or Le-HBsAg and the other 'internal' or Li-HBsAg. In its external conformation the protein attaches the virus to cell receptors and thereby initiating infection. This interaction determines the species specificity and liver tropism. This attachment induces virion internalization predominantly through caveolin-mediated endocytosis. The large envelope protein also assures fusion between virion membrane and endosomal membrane. In its internal conformation the protein plays a role in virion morphogenesis and mediates the contact with the nucleocapsid like a matrix protein. In terms of biological role, the middle envelope protein plays an important role in the budding of the virion. It is involved in the induction of budding in a nucleocapsid independent way. In this process the majority of envelope proteins bud to form subviral lipoprotein particles of 22 nm of diameter that do not contain a nucleocapsid. The sequence is that of Large envelope protein from Homo sapiens (Human).